We begin with the raw amino-acid sequence, 471 residues long: Ribulose bisphosphate carboxylase large chain (471 aa).

At Lys5 the chain carries N6,N6,N6-trimethyllysine. Substrate contacts are provided by Asn114 and Thr164. The active-site Proton acceptor is the Lys166. Lys168 is a substrate binding site. Lys192, Asp194, and Glu195 together coordinate Mg(2+). Residue Lys192 is modified to N6-carboxylysine. Residue His285 is the Proton acceptor of the active site. The substrate site is built by Arg286, His318, and Ser370.

The protein belongs to the RuBisCO large chain family. Type I subfamily. Heterohexadecamer of 8 large chains and 8 small chains; disulfide-linked. The disulfide link is formed within the large subunit homodimers. Mg(2+) serves as cofactor. In terms of processing, the disulfide bond which can form in the large chain dimeric partners within the hexadecamer appears to be associated with oxidative stress and protein turnover.

The protein localises to the plastid. Its subcellular location is the chloroplast. The enzyme catalyses 2 (2R)-3-phosphoglycerate + 2 H(+) = D-ribulose 1,5-bisphosphate + CO2 + H2O. It carries out the reaction D-ribulose 1,5-bisphosphate + O2 = 2-phosphoglycolate + (2R)-3-phosphoglycerate + 2 H(+). RuBisCO catalyzes two reactions: the carboxylation of D-ribulose 1,5-bisphosphate, the primary event in carbon dioxide fixation, as well as the oxidative fragmentation of the pentose substrate in the photorespiration process. Both reactions occur simultaneously and in competition at the same active site. In Strychnos nux-vomica (Poison nut), this protein is Ribulose bisphosphate carboxylase large chain.